A 286-amino-acid polypeptide reads, in one-letter code: MAIPKIVLFYQFTPLADPEAIKLWQHSLAESNNLTGRIIVSPHGINATVGGDIEDVKRYVRGTRGYEPFRTADIKWSDGLGNDFPRLSVKARSEIVTFGAPDELKVDENGVVGGGVHLAPKELHELVDSRGDDVVFFDGRNAFEAEIGRFRDAVVPDVATTRDFVDELDSGKYDHLKGKAVVTYCTGGVRCEVLSSLMRSRGFDEVYQLDGGIVRYGETFGDRGLWDGSLYVFDKRMNIEFSSEAKTLGVCVDCGTPTPRYRNRIDGDGRTLELLCESCSPDLEQD.

The 96-residue stretch at 130–225 folds into the Rhodanese domain; sequence RGDDVVFFDG…YGETFGDRGL (96 aa). The active-site Cysteine persulfide intermediate is the cysteine 185.

The protein belongs to the TrhO family.

The enzyme catalyses uridine(34) in tRNA + AH2 + O2 = 5-hydroxyuridine(34) in tRNA + A + H2O. Its function is as follows. Catalyzes oxygen-dependent 5-hydroxyuridine (ho5U) modification at position 34 in tRNAs. This chain is tRNA uridine(34) hydroxylase, found in Rhodococcus erythropolis (strain PR4 / NBRC 100887).